A 58-amino-acid chain; its full sequence is UPF0509 protein YciZ (58 aa).

This sequence belongs to the UPF0509 family.

This Escherichia fergusonii (strain ATCC 35469 / DSM 13698 / CCUG 18766 / IAM 14443 / JCM 21226 / LMG 7866 / NBRC 102419 / NCTC 12128 / CDC 0568-73) protein is UPF0509 protein YciZ.